We begin with the raw amino-acid sequence, 180 residues long: tRNA (cytidine(56)-2'-O)-methyltransferase (180 aa).

S-adenosyl-L-methionine-binding positions include Leu-84 and 112–116; that span reads GAEKV.

The protein belongs to the aTrm56 family. In terms of assembly, homodimer.

Its subcellular location is the cytoplasm. It catalyses the reaction cytidine(56) in tRNA + S-adenosyl-L-methionine = 2'-O-methylcytidine(56) in tRNA + S-adenosyl-L-homocysteine + H(+). Its function is as follows. Specifically catalyzes the AdoMet-dependent 2'-O-ribose methylation of cytidine at position 56 in tRNAs. In Natronomonas pharaonis (strain ATCC 35678 / DSM 2160 / CIP 103997 / JCM 8858 / NBRC 14720 / NCIMB 2260 / Gabara) (Halobacterium pharaonis), this protein is tRNA (cytidine(56)-2'-O)-methyltransferase.